We begin with the raw amino-acid sequence, 363 residues long: MAP kinase kinase mkk-4 (363 aa).

Residues 1-38 are disordered; sequence MVQEDDENLRNSMSLRPTSLSTRPTSLSVNGNEKTLPE. The segment covering 14–28 has biased composition (low complexity); sequence SLRPTSLSTRPTSLS. A Protein kinase domain is found at 66-330; it reads LQDLGAIGNG…YDTLKSFDFY (265 aa). Residues 72–80 and lysine 95 contribute to the ATP site; that span reads IGNGNFGTV. Aspartate 194 functions as the Proton acceptor in the catalytic mechanism.

Belongs to the protein kinase superfamily. STE Ser/Thr protein kinase family. MAP kinase kinase subfamily. In terms of tissue distribution, expressed in the pharynx, including the corpus, isthmus and terminal bulb.

Its subcellular location is the cytoplasm. The enzyme catalyses L-seryl-[protein] + ATP = O-phospho-L-seryl-[protein] + ADP + H(+). The catalysed reaction is L-threonyl-[protein] + ATP = O-phospho-L-threonyl-[protein] + ADP + H(+). It catalyses the reaction L-tyrosyl-[protein] + ATP = O-phospho-L-tyrosyl-[protein] + ADP + H(+). Functionally, activity is required in presynaptic neurons, in a dose-dependent manner, for normal presynaptic development and morphology. Plays a role in the formation of muscle connections, also called muscle arm extensions, between the body wall and the motor axons in the dorsal and ventral cord. The protein is MAP kinase kinase mkk-4 (mkk-4) of Caenorhabditis elegans.